A 506-amino-acid chain; its full sequence is (+)-vincadifformine 19-hydroxylase (506 aa).

The Lumenal segment spans residues 1–4 (MELD). Residues 5–25 (ECSPSIFIISFIFIAISIAIL) form a helical membrane-spanning segment. At 26 to 506 (RRIRPKKTKA…DLHLIPTSYM (481 aa)) the chain is on the cytoplasmic side. Residue Cys450 participates in heme binding.

This sequence belongs to the cytochrome P450 family. Heme serves as cofactor. Accumulates progressively in roots.

It is found in the endoplasmic reticulum membrane. The enzyme catalyses (+)-vincadifformine + reduced [NADPH--hemoprotein reductase] + O2 = (+)-minovincinine + oxidized [NADPH--hemoprotein reductase] + H2O + H(+). The protein operates within alkaloid biosynthesis. The enantiomer (-)-vincadifformine acts as a competitive inhibitor. Functionally, component of the monoterpenoid indole alkaloids (MIAs, e.g. echitovenine, tabersonine, lochnericine, 19-hydroxytabersonine and horhammericine) biosynthetic pathway; MIAs are used in cancer treatment and other medical applications. Cytochrome P450 catalyzing the hydroxylation of (+)-vincadifformine to (+)-minovincinine. The protein is (+)-vincadifformine 19-hydroxylase of Catharanthus roseus (Madagascar periwinkle).